The chain runs to 471 residues: Methionine aminopeptidase 2 (471 aa).

Disordered stretches follow at residues Val-16–Phe-80 and Cys-92–Arg-139. Over residues Glu-32–Val-47 the composition is skewed to acidic residues. Positions Lys-52–Gly-65 are enriched in basic residues. The segment covering Ala-119 to Arg-139 has biased composition (basic and acidic residues). Position 224 (His-224) interacts with substrate. A divalent metal cation contacts are provided by Asp-244, Asp-255, and His-324. His-332 is a binding site for substrate. A divalent metal cation-binding residues include Glu-357 and Glu-452.

Belongs to the peptidase M24A family. Methionine aminopeptidase eukaryotic type 2 subfamily. Requires Co(2+) as cofactor. It depends on Zn(2+) as a cofactor. Mn(2+) serves as cofactor. Fe(2+) is required as a cofactor.

It is found in the cytoplasm. It catalyses the reaction Release of N-terminal amino acids, preferentially methionine, from peptides and arylamides.. Its function is as follows. Cotranslationally removes the N-terminal methionine from nascent proteins. The N-terminal methionine is often cleaved when the second residue in the primary sequence is small and uncharged (Met-Ala-, Cys, Gly, Pro, Ser, Thr, or Val). The sequence is that of Methionine aminopeptidase 2 from Yarrowia lipolytica (strain CLIB 122 / E 150) (Yeast).